Consider the following 103-residue polypeptide: Large ribosomal subunit protein bL21 (103 aa).

The protein belongs to the bacterial ribosomal protein bL21 family. As to quaternary structure, part of the 50S ribosomal subunit. Contacts protein L20.

This protein binds to 23S rRNA in the presence of protein L20. This chain is Large ribosomal subunit protein bL21, found in Nautilia profundicola (strain ATCC BAA-1463 / DSM 18972 / AmH).